Here is a 601-residue protein sequence, read N- to C-terminus: Translation initiation factor IF-2 (601 aa).

Residues 54–101 (GHTASAEPAPAQASGSPASPAQTEAQEAPQPTATATAEREPAAPPARE) are disordered. A compositionally biased stretch (low complexity) spans 57–89 (ASAEPAPAQASGSPASPAQTEAQEAPQPTATAT). A tr-type G domain is found at 104-273 (HRAPVVTIMG…SLTAELEDLR (170 aa)). The segment at 113-120 (GHVDHGKT) is G1. 113-120 (GHVDHGKT) is a GTP binding site. Positions 138-142 (GITQH) are G2. The segment at 159 to 162 (DTPG) is G3. GTP-binding positions include 159 to 163 (DTPGH) and 213 to 216 (NKVD). A G4 region spans residues 213-216 (NKVD). Positions 249–251 (SAK) are G5.

The protein belongs to the TRAFAC class translation factor GTPase superfamily. Classic translation factor GTPase family. IF-2 subfamily.

Its subcellular location is the cytoplasm. One of the essential components for the initiation of protein synthesis. Protects formylmethionyl-tRNA from spontaneous hydrolysis and promotes its binding to the 30S ribosomal subunits. Also involved in the hydrolysis of GTP during the formation of the 70S ribosomal complex. In Deinococcus geothermalis (strain DSM 11300 / CIP 105573 / AG-3a), this protein is Translation initiation factor IF-2.